Here is a 433-residue protein sequence, read N- to C-terminus: F-box only protein 15 (433 aa).

The 41-residue stretch at 1–41 (MPSEILVKILSYLDAVTLVCIGCVSRRFYHLADDNLIWVRK) folds into the F-box domain.

In terms of assembly, directly interacts with SKP1 and CUL1. In terms of tissue distribution, expressed in testis.

In terms of biological role, substrate-recognition component of the SCF (SKP1-CUL1-F-box protein)-type E3 ubiquitin ligase complex. The protein is F-box only protein 15 (Fbxo15) of Mus musculus (Mouse).